Reading from the N-terminus, the 479-residue chain is Membrane-bound lytic murein transglycosylase F (479 aa).

The signal sequence occupies residues 1–18 (MKGLFIRIVLAICLSLWA). The tract at residues 19–266 (IDMVFPWQQI…RIEEKYFNHL (248 aa)) is non-LT domain. An LT domain region spans residues 267-479 (NQFDYVDTRS…ISTQTQQEQR (213 aa)). Glu-311 is a catalytic residue.

In the N-terminal section; belongs to the bacterial solute-binding protein 3 family. The protein in the C-terminal section; belongs to the transglycosylase Slt family.

The protein localises to the cell outer membrane. It catalyses the reaction Exolytic cleavage of the (1-&gt;4)-beta-glycosidic linkage between N-acetylmuramic acid (MurNAc) and N-acetylglucosamine (GlcNAc) residues in peptidoglycan, from either the reducing or the non-reducing ends of the peptidoglycan chains, with concomitant formation of a 1,6-anhydrobond in the MurNAc residue.. Murein-degrading enzyme that degrades murein glycan strands and insoluble, high-molecular weight murein sacculi, with the concomitant formation of a 1,6-anhydromuramoyl product. Lytic transglycosylases (LTs) play an integral role in the metabolism of the peptidoglycan (PG) sacculus. Their lytic action creates space within the PG sacculus to allow for its expansion as well as for the insertion of various structures such as secretion systems and flagella. The polypeptide is Membrane-bound lytic murein transglycosylase F (Histophilus somni (strain 2336) (Haemophilus somnus)).